The following is a 137-amino-acid chain: Cellular retinoic acid-binding protein 1 (137 aa).

A Nuclear localization signal motif is present at residues 21 to 31; that stretch reads KALGVNAMLRK. Position 132 to 134 (132 to 134) interacts with all-trans-retinoate; the sequence is RIY.

Belongs to the calycin superfamily. Fatty-acid binding protein (FABP) family.

The protein localises to the cytoplasm. Its function is as follows. Cytosolic CRABPs may regulate the access of retinoic acid to the nuclear retinoic acid receptors. This Hippocampus comes (Tiger tail seahorse) protein is Cellular retinoic acid-binding protein 1 (crabp1).